Consider the following 871-residue polypeptide: Envelope glycoprotein gp160 (871 aa).

Residues 1 to 21 form the signal peptide; the sequence is MKNLIGITLILIITILGIGFS. Topologically, residues 22–684 are extracellular; that stretch reads TYYTTVFYGV…DITQWLWYIK (663 aa). An intrachain disulfide couples Cys-43 to Cys-63. 25 N-linked (GlcNAc...) asparagine; by host glycosylation sites follow: Asn-77, Asn-124, Asn-127, Asn-142, Asn-153, Asn-157, Asn-185, Asn-194, Asn-229, Asn-238, Asn-259, Asn-273, Asn-285, Asn-289, Asn-297, Asn-329, Asn-345, Asn-352, Asn-384, Asn-387, Asn-395, Asn-398, Asn-438, Asn-451, and Asn-496. Cystine bridges form between Cys-108–Cys-202, Cys-115–Cys-193, Cys-120–Cys-154, Cys-215–Cys-244, and Cys-225–Cys-236. Positions 120 to 153 are V1; that stretch reads CTMTNTTNKTLNSATTTLTPTVNLSSIPNYEVYN. The tract at residues 154–193 is V2; that stretch reads CSFNQTTEFRDKKKQIYSLFYREDIVKEDGNNNSYYLHNC. Positions 292 to 325 are V3; that stretch reads CERTGNNTRGQVQIGPGMTFYNIENVVGDTRKAY. Cys-292 and Cys-326 form a disulfide bridge. Intrachain disulfides connect Cys-376–Cys-435 and Cys-383–Cys-408. The interval 383 to 408 is V4; that stretch reads CNLTNWTNTWTANRTNNTHGTLVAPC. Residues 451 to 458 are V5; that stretch reads NNSYTPQF. Residues 502–522 form a fusion peptide region; sequence RDVGIGLLFLGFLSAAGSTMG. An immunosuppression region spans residues 567–583; the sequence is LQARMLAVEKYIRDQQL. N-linked (GlcNAc...) asparagine; by host glycosylation is found at Asn-602, Asn-613, Asn-626, and Asn-638. A coiled-coil region spans residues 645–668; it reads SLLEKAQTQQEKNKQELLELDKWS. The segment at 663–684 is MPER; binding to GalCer; it reads ELDKWSSLWDWFDITQWLWYIK. A helical transmembrane segment spans residues 685–705; sequence IAIIIVAGLVGLRILMFIVNV. The Cytoplasmic portion of the chain corresponds to 706 to 871; that stretch reads VKQVRQGYTP…IRQGLELALN (166 aa). The YXXL motif; contains endocytosis signal signature appears at 713 to 716; it reads YTPL.

As to quaternary structure, the mature envelope protein (Env) consists of a homotrimer of non-covalently associated gp120-gp41 heterodimers. The resulting complex protrudes from the virus surface as a spike. Interacts with host CD4 and CCR5. Gp120 also interacts with the C-type lectins CD209/DC-SIGN and CLEC4M/DC-SIGNR (collectively referred to as DC-SIGN(R)). The mature envelope protein (Env) consists of a homotrimer of non-covalently associated gp120-gp41 heterodimers. The resulting complex protrudes from the virus surface as a spike. In terms of processing, specific enzymatic cleavages in vivo yield mature proteins. Envelope glycoproteins are synthesized as an inactive precursor that is heavily N-glycosylated and processed likely by host cell furin in the Golgi to yield the mature SU and TM proteins. The cleavage site between SU and TM requires the minimal sequence [KR]-X-[KR]-R.

It localises to the virion membrane. The protein resides in the host cell membrane. The protein localises to the host endosome membrane. Functionally, the surface protein gp120 (SU) attaches the virus to the host lymphoid cell by binding to the primary receptor CD4. This interaction induces a structural rearrangement creating a high affinity binding site for a chemokine coreceptor like CCR5. This peculiar 2 stage receptor-interaction strategy allows gp120 to maintain the highly conserved coreceptor-binding site in a cryptic conformation, protected from neutralizing antibodies. These changes are transmitted to the transmembrane protein gp41 and are thought to activate its fusogenic potential by unmasking its fusion peptide. Surface protein gp120 (SU) may target the virus to gut-associated lymphoid tissue (GALT) by binding host ITGA4/ITGB7 (alpha-4/beta-7 integrins), a complex that mediates T-cell migration to the GALT. Interaction between gp120 and ITGA4/ITGB7 would allow the virus to enter GALT early in the infection, infecting and killing most of GALT's resting CD4+ T-cells. This T-cell depletion is believed to be the major insult to the host immune system leading to AIDS. Its function is as follows. The surface protein gp120 is a ligand for CD209/DC-SIGN and CLEC4M/DC-SIGNR, which are respectively found on dendritic cells (DCs), and on endothelial cells of liver sinusoids and lymph node sinuses. These interactions allow capture of viral particles at mucosal surfaces by these cells and subsequent transmission to permissive cells. DCs are professional antigen presenting cells, critical for host immunity by inducing specific immune responses against a broad variety of pathogens. They act as sentinels in various tissues where they take up antigen, process it, and present it to T-cells following migration to lymphoid organs. SIV subverts the migration properties of dendritic cells to gain access to CD4+ T-cells in lymph nodes. Virus transmission to permissive T-cells occurs either in trans (without DCs infection, through viral capture and transmission), or in cis (following DCs productive infection, through the usual CD4-gp120 interaction), thereby inducing a robust infection. In trans infection, bound virions remain infectious over days and it is proposed that they are not degraded, but protected in non-lysosomal acidic organelles within the DCs close to the cell membrane thus contributing to the viral infectious potential during DCs' migration from the periphery to the lymphoid tissues. On arrival at lymphoid tissues, intact virions recycle back to DCs' cell surface allowing virus transmission to CD4+ T-cells. Virion capture also seems to lead to MHC-II-restricted viral antigen presentation, and probably to the activation of SIV-specific CD4+ cells. In terms of biological role, the transmembrane protein gp41 (TM) acts as a class I viral fusion protein. Under the current model, the protein has at least 3 conformational states: pre-fusion native state, pre-hairpin intermediate state, and post-fusion hairpin state. During fusion of viral and target intracellular membranes, the coiled coil regions (heptad repeats) assume a trimer-of-hairpins structure, positioning the fusion peptide in close proximity to the C-terminal region of the ectodomain. The formation of this structure appears to drive apposition and subsequent fusion of viral and target cell membranes. Complete fusion occurs in host cell endosomes. The virus undergoes clathrin-dependent internalization long before endosomal fusion, thus minimizing the surface exposure of conserved viral epitopes during fusion and reducing the efficacy of inhibitors targeting these epitopes. Membranes fusion leads to delivery of the nucleocapsid into the cytoplasm. Functionally, the envelope glycoprotein gp160 precursor down-modulates cell surface CD4 antigen by interacting with it in the endoplasmic reticulum and blocking its transport to the cell surface. The gp120-gp41 heterodimer allows rapid transcytosis of the virus through CD4 negative cells such as simple epithelial monolayers of the intestinal, rectal and endocervical epithelial barriers. Both gp120 and gp41 specifically recognize glycosphingolipids galactosyl-ceramide (GalCer) or 3' sulfo-galactosyl-ceramide (GalS) present in the lipid rafts structures of epithelial cells. Binding to these alternative receptors allows the rapid transcytosis of the virus through the epithelial cells. This transcytotic vesicle-mediated transport of virions from the apical side to the basolateral side of the epithelial cells does not involve infection of the cells themselves. The sequence is that of Envelope glycoprotein gp160 from Simian immunodeficiency virus (isolate TAN1) (SIV-cpz).